The primary structure comprises 249 residues: uncharacterized protein (249 aa).

The span at 51–67 shows a compositional bias: polar residues; sequence IPKDSLTNGKSSKNCMS. 2 disordered regions span residues 51–131 and 205–240; these read IPKD…DSPV and YLNA…SSDG. A compositionally biased stretch (low complexity) spans 93 to 106; the sequence is SFQSMNSSMSSSTQ. The span at 110–129 shows a compositional bias: basic and acidic residues; that stretch reads RILDEKNKDQSSSNENDRDS.

It belongs to the asfivirus DP238L family.

This is an uncharacterized protein from African swine fever virus (isolate Tick/Malawi/Lil 20-1/1983) (ASFV).